Consider the following 252-residue polypeptide: Probable transcriptional regulatory protein TW504 (252 aa).

The protein belongs to the TACO1 family.

It localises to the cytoplasm. The protein is Probable transcriptional regulatory protein TW504 of Tropheryma whipplei (strain TW08/27) (Whipple's bacillus).